The primary structure comprises 504 residues: Cholesterol 7-alpha-monooxygenase (504 aa).

Position 444 (cysteine 444) interacts with heme.

Belongs to the cytochrome P450 family. Heme serves as cofactor.

Its subcellular location is the endoplasmic reticulum membrane. It localises to the microsome membrane. It carries out the reaction cholesterol + reduced [NADPH--hemoprotein reductase] + O2 = 7alpha-hydroxycholesterol + oxidized [NADPH--hemoprotein reductase] + H2O + H(+). The protein operates within lipid metabolism; bile acid biosynthesis. Its function is as follows. Catalyzes a rate-limiting step in cholesterol catabolism and bile acid biosynthesis by introducing a hydrophilic moiety at position 7 of cholesterol. Important for cholesterol homeostasis. The polypeptide is Cholesterol 7-alpha-monooxygenase (CYP7A1) (Cricetulus griseus (Chinese hamster)).